A 555-amino-acid chain; its full sequence is Formate--tetrahydrofolate ligase (555 aa).

T65–S72 is an ATP binding site.

This sequence belongs to the formate--tetrahydrofolate ligase family.

It carries out the reaction (6S)-5,6,7,8-tetrahydrofolate + formate + ATP = (6R)-10-formyltetrahydrofolate + ADP + phosphate. It functions in the pathway one-carbon metabolism; tetrahydrofolate interconversion. This chain is Formate--tetrahydrofolate ligase, found in Staphylococcus aureus (strain USA300).